Here is a 311-residue protein sequence, read N- to C-terminus: tRNA-cytidine(32) 2-sulfurtransferase (311 aa).

A PP-loop motif motif is present at residues 47-52; sequence SGGKDS. Residues Cys122, Cys125, and Cys213 each contribute to the [4Fe-4S] cluster site.

It belongs to the TtcA family. Homodimer. Mg(2+) serves as cofactor. It depends on [4Fe-4S] cluster as a cofactor.

It is found in the cytoplasm. It carries out the reaction cytidine(32) in tRNA + S-sulfanyl-L-cysteinyl-[cysteine desulfurase] + AH2 + ATP = 2-thiocytidine(32) in tRNA + L-cysteinyl-[cysteine desulfurase] + A + AMP + diphosphate + H(+). Its pathway is tRNA modification. Its function is as follows. Catalyzes the ATP-dependent 2-thiolation of cytidine in position 32 of tRNA, to form 2-thiocytidine (s(2)C32). The sulfur atoms are provided by the cysteine/cysteine desulfurase (IscS) system. The sequence is that of tRNA-cytidine(32) 2-sulfurtransferase from Escherichia coli O7:K1 (strain IAI39 / ExPEC).